Reading from the N-terminus, the 410-residue chain is NADH-quinone oxidoreductase subunit H (410 aa).

A run of 9 helical transmembrane segments spans residues 11 to 31, 79 to 99, 119 to 139, 160 to 180, 192 to 212, 257 to 277, 283 to 303, 317 to 337, and 347 to 367; these read LVAA…LVAI, FVYF…FAFI, LPVA…GIVL, VISY…MAGT, GVWY…SMVG, ALAA…NMWA, WWPL…YFWL, ALGW…AAII, and YWTP…VLLL. Residues 376-410 form a disordered region; it reads ARASARQRGDEGTSPEPAFPTPPLLAGATKENAGG.

It belongs to the complex I subunit 1 family. In terms of assembly, NDH-1 is composed of 14 different subunits. Subunits NuoA, H, J, K, L, M, N constitute the membrane sector of the complex.

It localises to the cell membrane. The enzyme catalyses a quinone + NADH + 5 H(+)(in) = a quinol + NAD(+) + 4 H(+)(out). In terms of biological role, NDH-1 shuttles electrons from NADH, via FMN and iron-sulfur (Fe-S) centers, to quinones in the respiratory chain. The immediate electron acceptor for the enzyme in this species is believed to be menaquinone. Couples the redox reaction to proton translocation (for every two electrons transferred, four hydrogen ions are translocated across the cytoplasmic membrane), and thus conserves the redox energy in a proton gradient. This is NADH-quinone oxidoreductase subunit H from Mycobacterium bovis (strain ATCC BAA-935 / AF2122/97).